The primary structure comprises 196 residues: Lipoprotein signal peptidase (196 aa).

3 helical membrane-spanning segments follow: residues Ser-17 to Leu-37, Ser-73 to Ile-93, and Asn-96 to Ile-116. Active-site residues include Asp-126 and Asp-144. The chain crosses the membrane as a helical span at residues Tyr-135 to Ile-155.

Belongs to the peptidase A8 family.

It localises to the cell inner membrane. The enzyme catalyses Release of signal peptides from bacterial membrane prolipoproteins. Hydrolyzes -Xaa-Yaa-Zaa-|-(S,diacylglyceryl)Cys-, in which Xaa is hydrophobic (preferably Leu), and Yaa (Ala or Ser) and Zaa (Gly or Ala) have small, neutral side chains.. The protein operates within protein modification; lipoprotein biosynthesis (signal peptide cleavage). In terms of biological role, this protein specifically catalyzes the removal of signal peptides from prolipoproteins. The protein is Lipoprotein signal peptidase of Rickettsia akari (strain Hartford).